We begin with the raw amino-acid sequence, 135 residues long: Probable disulfide formation protein (135 aa).

The helical transmembrane segment at 7–26 (SYCLYLAWLFSCIGTLMSVY) threads the bilayer. Cysteines 36 and 39 form a disulfide. The next 2 membrane-spanning stretches (helical) occupy residues 41–60 (YQRI…AYRE) and 67–84 (YTLP…YQVC). Cys96 and Cys101 are disulfide-bonded. A helical membrane pass occupies residues 109 to 131 (GFITMPMASAAAFCAIACLLVLA).

It belongs to the DsbB family. BdbC subfamily.

The protein resides in the cell inner membrane. Functionally, required for disulfide bond formation in some proteins. The chain is Probable disulfide formation protein from Chlamydia trachomatis serovar D (strain ATCC VR-885 / DSM 19411 / UW-3/Cx).